The chain runs to 180 residues: Crossover junction endodeoxyribonuclease RuvC (180 aa).

Catalysis depends on residues Asp-7, Glu-66, and Asp-138. Residues Asp-7, Glu-66, and Asp-138 each coordinate Mg(2+).

Belongs to the RuvC family. Homodimer which binds Holliday junction (HJ) DNA. The HJ becomes 2-fold symmetrical on binding to RuvC with unstacked arms; it has a different conformation from HJ DNA in complex with RuvA. In the full resolvosome a probable DNA-RuvA(4)-RuvB(12)-RuvC(2) complex forms which resolves the HJ. Requires Mg(2+) as cofactor.

It localises to the cytoplasm. It catalyses the reaction Endonucleolytic cleavage at a junction such as a reciprocal single-stranded crossover between two homologous DNA duplexes (Holliday junction).. The RuvA-RuvB-RuvC complex processes Holliday junction (HJ) DNA during genetic recombination and DNA repair. Endonuclease that resolves HJ intermediates. Cleaves cruciform DNA by making single-stranded nicks across the HJ at symmetrical positions within the homologous arms, yielding a 5'-phosphate and a 3'-hydroxyl group; requires a central core of homology in the junction. The consensus cleavage sequence is 5'-(A/T)TT(C/G)-3'. Cleavage occurs on the 3'-side of the TT dinucleotide at the point of strand exchange. HJ branch migration catalyzed by RuvA-RuvB allows RuvC to scan DNA until it finds its consensus sequence, where it cleaves and resolves the cruciform DNA. This chain is Crossover junction endodeoxyribonuclease RuvC, found in Burkholderia thailandensis (strain ATCC 700388 / DSM 13276 / CCUG 48851 / CIP 106301 / E264).